The sequence spans 545 residues: Afadin- and alpha-actinin-binding protein B (545 aa).

Coiled-coil stretches lie at residues 106-287 and 358-442; these read RSKE…SQRK and ARGD…AIRL. The interval 497 to 545 is disordered; the sequence is HDRHLASSGDHYQRPRKTLPITPSSKHSLTQRESVAWRDSSISPNGTDF. Polar residues-rich tracts occupy residues 517 to 529 and 536 to 545; these read ITPS…TQRE and SSISPNGTDF.

Belongs to the ADIP family. Interacts with WRAP73.

The protein localises to the cell junction. The protein resides in the adherens junction. It is found in the cytoplasm. It localises to the cytoskeleton. Its subcellular location is the microtubule organizing center. The protein localises to the centrosome. The protein resides in the centriolar satellite. Functionally, belongs to an adhesion system, which plays a role in the organization of homotypic, interneuronal and heterotypic cell-cell adherens junctions (AJs). Involved in cell movement. Acts as a centrosome maturation factor, probably by maintaining the integrity of the pericentriolar material and proper microtubule nucleation at mitotic spindle poles. The function seems to implicate at least in part WRAP73; the SSX2IP:WRAP73 complex is proposed to act as regulator of spindle anchoring at the mitotic centrosome. In Xenopus laevis (African clawed frog), this protein is Afadin- and alpha-actinin-binding protein B (ssx2ip-b).